Here is a 197-residue protein sequence, read N- to C-terminus: RNA polymerase II subunit A C-terminal domain phosphatase ssup-72 (197 aa).

Position 39 is a phosphoserine (S39).

The protein belongs to the SSU72 phosphatase family. As to quaternary structure, may interact with synd-1 (via C-terminus); the interaction may prevent ssup-72 binding to RNA polymerase II ama-1. May interact with RNA polymerase II ama-1. In terms of processing, may be phosphorylated by kin-20. Expressed in epidermis, intestine and nervous system.

It is found in the nucleus. The catalysed reaction is O-phospho-L-seryl-[protein] + H2O = L-seryl-[protein] + phosphate. It catalyses the reaction O-phospho-L-threonyl-[protein] + H2O = L-threonyl-[protein] + phosphate. In terms of biological role, protein phosphatase that dephosphorylates 'Ser-5' of the heptad repeats YSPTSPS in the C-terminal domain of the large RNA polymerase II subunit ama-1. By regulating the phosphorylation status of ama-1 and thus ama-1 binding to specific polyadenylation sites, regulates alternative polyadenylation of pre-mRNAs, including unc-44 and dlk-1 mRNAs. This results in the tissue-specific expression of unc-44 isoforms. This is RNA polymerase II subunit A C-terminal domain phosphatase ssup-72 from Caenorhabditis elegans.